The sequence spans 212 residues: Large ribosomal subunit protein uL3 (212 aa).

It belongs to the universal ribosomal protein uL3 family. As to quaternary structure, part of the 50S ribosomal subunit. Forms a cluster with proteins L14 and L19.

One of the primary rRNA binding proteins, it binds directly near the 3'-end of the 23S rRNA, where it nucleates assembly of the 50S subunit. This chain is Large ribosomal subunit protein uL3, found in Ruminiclostridium cellulolyticum (strain ATCC 35319 / DSM 5812 / JCM 6584 / H10) (Clostridium cellulolyticum).